The sequence spans 263 residues: Tryptophan synthase alpha chain (263 aa).

Residues Glu-51 and Asp-62 each act as proton acceptor in the active site.

Belongs to the TrpA family. In terms of assembly, tetramer of two alpha and two beta chains.

It catalyses the reaction (1S,2R)-1-C-(indol-3-yl)glycerol 3-phosphate + L-serine = D-glyceraldehyde 3-phosphate + L-tryptophan + H2O. Its pathway is amino-acid biosynthesis; L-tryptophan biosynthesis; L-tryptophan from chorismate: step 5/5. Its function is as follows. The alpha subunit is responsible for the aldol cleavage of indoleglycerol phosphate to indole and glyceraldehyde 3-phosphate. This chain is Tryptophan synthase alpha chain, found in Methanosarcina barkeri (strain Fusaro / DSM 804).